Here is a 556-residue protein sequence, read N- to C-terminus: Arginine--tRNA ligase (556 aa).

The 'HIGH' region motif lies at 132-142 (ANPTGDLHLGH).

Belongs to the class-I aminoacyl-tRNA synthetase family. As to quaternary structure, monomer.

The protein resides in the cytoplasm. The catalysed reaction is tRNA(Arg) + L-arginine + ATP = L-arginyl-tRNA(Arg) + AMP + diphosphate. The chain is Arginine--tRNA ligase from Bacillus cereus (strain ATCC 10987 / NRS 248).